The chain runs to 824 residues: Leucine--tRNA ligase (824 aa).

The short motif at 42 to 52 is the 'HIGH' region element; that stretch reads PYPSGRIHMGH. The 'KMSKS' region signature appears at 581–585; it reads KMSKS. Position 584 (Lys584) interacts with ATP.

Belongs to the class-I aminoacyl-tRNA synthetase family.

It is found in the cytoplasm. The catalysed reaction is tRNA(Leu) + L-leucine + ATP = L-leucyl-tRNA(Leu) + AMP + diphosphate. This chain is Leucine--tRNA ligase, found in Geotalea daltonii (strain DSM 22248 / JCM 15807 / FRC-32) (Geobacter daltonii).